The primary structure comprises 260 residues: Adenosylcobinamide-GDP ribazoletransferase (260 aa).

7 helical membrane passes run 42–62 (TWAL…VYKI), 68–88 (LTPN…TGAL), 118–137 (IGTY…WSAL), 144–166 (WLVT…AFMS), 180–200 (AGAP…LVLT), 201–221 (LALG…AGLI), and 237–257 (ILGA…AAFQ).

This sequence belongs to the CobS family. Requires Mg(2+) as cofactor.

The protein localises to the cell inner membrane. It carries out the reaction alpha-ribazole + adenosylcob(III)inamide-GDP = adenosylcob(III)alamin + GMP + H(+). The catalysed reaction is alpha-ribazole 5'-phosphate + adenosylcob(III)inamide-GDP = adenosylcob(III)alamin 5'-phosphate + GMP + H(+). It functions in the pathway cofactor biosynthesis; adenosylcobalamin biosynthesis; adenosylcobalamin from cob(II)yrinate a,c-diamide: step 7/7. Joins adenosylcobinamide-GDP and alpha-ribazole to generate adenosylcobalamin (Ado-cobalamin). Also synthesizes adenosylcobalamin 5'-phosphate from adenosylcobinamide-GDP and alpha-ribazole 5'-phosphate. This chain is Adenosylcobinamide-GDP ribazoletransferase, found in Bradyrhizobium diazoefficiens (strain JCM 10833 / BCRC 13528 / IAM 13628 / NBRC 14792 / USDA 110).